The primary structure comprises 380 residues: Calreticulin-3 (380 aa).

An N-terminal signal peptide occupies residues 1-19 (MVSARALLWAICVLRVALA). Residues 20-197 (TVYFQEEFLD…GQSIESGSIE (178 aa)) form an N-domain region. An N-linked (GlcNAc...) asparagine glycan is attached at Asn-42. An alpha-D-glucoside is bound by residues Tyr-109, Lys-111, Tyr-128, and Asp-135. Cys-137 and Cys-163 are disulfide-bonded. 7 consecutive repeat copies span residues 191 to 202 (IESGSIEYDWNL), 209 to 220 (EKTSLDSRDWDQ), 222 to 231 (EGSKVQDWEK), 235 to 246 (DAGASKPSDWNS), 250 to 256 (GDWLQKP), 260 to 268 (DGLKAEGID), and 270 to 280 (DVWLHQKMRPA). The tract at residues 191–246 (IESGSIEYDWNLTSLRKTEKTSLDSRDWDQVEGSKVQDWEKHFLDAGASKPSDWNS) is 4 X approximate repeats. Residues 198–291 (YDWNLTSLRK…YLTQYDLSEF (94 aa)) are P-domain. Residue Asn-201 is glycosylated (N-linked (GlcNAc...) asparagine). Residues 250–280 (GDWLQKPPYEDGLKAEGIDKDVWLHQKMRPA) form a 3 X approximate repeats region. The tract at residues 292 to 380 (ENIGAIGLEL…FSRFHRQGEL (89 aa)) is C-domain. An alpha-D-glucoside is bound at residue Glu-300. The Prevents secretion from ER signature appears at 377-380 (QGEL).

The protein belongs to the calreticulin family. Component of an EIF2 complex at least composed of CELF1/CUGBP1, CALR, CALR3, EIF2S1, EIF2S2, HSP90B1 and HSPA5. In terms of tissue distribution, testis specific, absent in mature sperm.

Its subcellular location is the endoplasmic reticulum lumen. Functionally, CALR3 capacity for calcium-binding may be absent or much lower than that of CALR. During spermatogenesis, may act as a lectin-independent chaperone for specific client proteins such as ADAM3. Required for sperm fertility. This Mus musculus (Mouse) protein is Calreticulin-3 (Calr3).